We begin with the raw amino-acid sequence, 328 residues long: MKLRSVTYALFIAGLAAFSTSSLAAQSLRFGYETSQTDSQHIAAKKFNDLLQERTKGELKLKLFPDSTLGNAQAMISGVRGGTIDMEMSGSNNFAGLSPVMNLLDVPFLFRDTAHAHKTLDGKVGDDLKASLEGKGLKVLAYWENGWRDVTNSRAPVKTPADLKGLKIRTNNSPMNIAAFKVFGANPIPMPFAEVYTGLETRTIDAQEHPINVVWSAKFFEVQKFLSLTHHAYSPLLVVINKAKFDGLSPEFQQALVSSAQEAGNYQRKLVAEDQQKIIDGMKEAGVEVITDLDRKAFSDALGNQVRDMFVKDVPQGADLLKAVDEVQ.

The signal sequence occupies residues 1–24 (MKLRSVTYALFIAGLAAFSTSSLA).

The complex comprises the extracytoplasmic solute receptor protein YiaO, and the two transmembrane proteins YiaM and YiaN.

The protein resides in the periplasm. Its function is as follows. Part of the tripartite ATP-independent periplasmic (TRAP) transport system YiaMNO involved in the uptake of 2,3-diketo-L-gulonate. This protein specifically binds 2,3-diketo-L-gulonate. Is not able to bind either L-ascorbate or dehydroascorbate. The polypeptide is 2,3-diketo-L-gulonate-binding periplasmic protein YiaO (yiaO) (Escherichia coli (strain K12)).